A 224-amino-acid chain; its full sequence is Precorrin-2 dehydrogenase (224 aa).

NAD(+)-binding positions include 26-27 and 47-50; these read SV and EFSQ.

Belongs to the precorrin-2 dehydrogenase / sirohydrochlorin ferrochelatase family. Homodimer.

The enzyme catalyses precorrin-2 + NAD(+) = sirohydrochlorin + NADH + 2 H(+). It participates in porphyrin-containing compound metabolism; siroheme biosynthesis; sirohydrochlorin from precorrin-2: step 1/1. Its function is as follows. Involved in the archaeal biosynthesis of heme. Catalyzes the oxiation of precorrin-2 into sirohydroclorin. This is Precorrin-2 dehydrogenase from Methanosarcina barkeri (strain Fusaro / DSM 804).